The primary structure comprises 6269 residues: Nonribosomal peptide synthetase 1 (6269 aa).

Positions 249-781 are adenylation 1; the sequence is ENDWSRVCSF…VSGKLDRKSI (533 aa). In terms of domain architecture, Carrier 1 spans 803-879; sequence RAANSTEDQL…ELATRVKGVT (77 aa). Serine 840 carries the O-(pantetheine 4'-phosphoryl)serine modification. Residues 894–1342 are epimerase 1; it reads LSPIQKLHFM…TLSDFPMLSL (449 aa). Residues 1373–1775 form a condensation 1 region; it reads SRMQQGILLS…FLQSLENIIH (403 aa). Residues 1725–2333 are adenylation 2; sequence HDPAEFPVYV…TGLLDRWFLR (609 aa). The disordered stretch occupies residues 2364–2386; the sequence is KPSPSQLLPSSTSATHRSSGTST. The span at 2367-2376 shows a compositional bias: low complexity; it reads PSQLLPSSTS. Over residues 2377 to 2386 the composition is skewed to polar residues; sequence ATHRSSGTST. The condensation 2 stretch occupies residues 2597-2670; that stretch reads WRKYLADVES…TGSEEVCYGY (74 aa). Positions 2845 to 3368 are adenylation 3; that stretch reads RCAHEIIEQQ…SGKLDRKKLR (524 aa). A Carrier 2 domain is found at 3392 to 3468; the sequence is ASDEGVEGTL…NMAKRCGMLQ (77 aa). Position 3429 is an O-(pantetheine 4'-phosphoryl)serine (serine 3429). Residues 3512-3898 form a condensation 3 region; the sequence is CSPVQEGLLT…GQFSFVLEQL (387 aa). The adenylation 4 stretch occupies residues 3919 to 4454; sequence DSKEVALWNK…VSGKLDRKKI (536 aa). The 77-residue stretch at 4487–4563 folds into the Carrier 3 domain; the sequence is EDKSTAAKIL…ELIQAAEVET (77 aa). At serine 4524 the chain carries O-(pantetheine 4'-phosphoryl)serine. The segment at 4578–5024 is epimerase 2; the sequence is LSPIQNLYFK…DFPLLPITYD (447 aa). The interval 5052-5466 is condensation 4; it reads SSVQEGILLS…PSQLVSELDL (415 aa). Residues 5552 to 5628 form the Carrier 4 domain; sequence SKLMEPEKRL…DMLAAISASN (77 aa). The residue at position 5589 (serine 5589) is an O-(pantetheine 4'-phosphoryl)serine. A disordered region spans residues 5628–5658; the sequence is NSSSALEPDSPADSNNEKPAEPPRLVELERN. Residues 5642-5657 are compositionally biased toward basic and acidic residues; the sequence is NNEKPAEPPRLVELER. The tract at residues 5720–6067 is condensation 5; it reads FFFDGRGSLD…SSSDGKLGVS (348 aa). The Carrier 5 domain maps to 6139–6220; it reads SDILVHSDVV…GQMAVLTLHN (82 aa).

Belongs to the NRP synthetase family. The thiolation domains are 4'-phosphopantetheinylated.

Its function is as follows. Nonribosomal peptide synthesis (NRPS) is a key mechanism responsible for the biosynthesis of bioactive metabolites which are potentially contributing to organismal virulence. Contributes to improved fungal tolerance against oxidative stress, during the infection process. The protein is Nonribosomal peptide synthetase 1 (NRPS1) of Aspergillus fumigatus (strain ATCC MYA-4609 / CBS 101355 / FGSC A1100 / Af293) (Neosartorya fumigata).